Here is a 164-residue protein sequence, read N- to C-terminus: FMN reductase (NADH) RutF (164 aa).

The protein belongs to the non-flavoprotein flavin reductase family. RutF subfamily.

It catalyses the reaction FMNH2 + NAD(+) = FMN + NADH + 2 H(+). Functionally, catalyzes the reduction of FMN to FMNH2 which is used to reduce pyrimidine by RutA via the Rut pathway. This Escherichia coli O150:H5 (strain SE15) protein is FMN reductase (NADH) RutF.